An 86-amino-acid chain; its full sequence is Large ribosomal subunit protein bL27 (86 aa).

Residues 1–10 (MAQKKGGGST) are compositionally biased toward gly residues. The segment at 1–21 (MAQKKGGGSTRNGRDSESKRL) is disordered.

This sequence belongs to the bacterial ribosomal protein bL27 family.

The sequence is that of Large ribosomal subunit protein bL27 from Cupriavidus necator (strain ATCC 17699 / DSM 428 / KCTC 22496 / NCIMB 10442 / H16 / Stanier 337) (Ralstonia eutropha).